The primary structure comprises 771 residues: 5-methyltetrahydropteroyltriglutamate--homocysteine methyltransferase (771 aa).

5-methyltetrahydropteroyltri-L-glutamate contacts are provided by residues 16–19 (RELK) and K117. L-homocysteine-binding positions include 443-445 (IGS) and E496. Residues 443–445 (IGS) and E496 each bind L-methionine. 5-methyltetrahydropteroyltri-L-glutamate-binding positions include 527 to 528 (RC) and W573. An L-homocysteine-binding site is contributed by D611. D611 provides a ligand contact to L-methionine. Position 617 (E617) interacts with 5-methyltetrahydropteroyltri-L-glutamate. Zn(2+) is bound by residues H653, C655, and E677. The active-site Proton donor is H706. C738 serves as a coordination point for Zn(2+).

Belongs to the vitamin-B12 independent methionine synthase family. Zn(2+) is required as a cofactor.

The enzyme catalyses 5-methyltetrahydropteroyltri-L-glutamate + L-homocysteine = tetrahydropteroyltri-L-glutamate + L-methionine. The protein operates within amino-acid biosynthesis; L-methionine biosynthesis via de novo pathway; L-methionine from L-homocysteine (MetE route): step 1/1. Catalyzes the transfer of a methyl group from 5-methyltetrahydrofolate to homocysteine resulting in methionine formation. This chain is 5-methyltetrahydropteroyltriglutamate--homocysteine methyltransferase, found in Stutzerimonas stutzeri (strain A1501) (Pseudomonas stutzeri).